An 807-amino-acid polypeptide reads, in one-letter code: ATP-binding cassette sub-family F member 1 (807 aa).

Residues M1–M227 are disordered. S22 is modified (phosphoserine). Basic residues predominate over residues K29–K39. The span at V47–Q65 shows a compositional bias: basic and acidic residues. Residues Q73 to K85 show a composition bias toward basic residues. Residue S106 is modified to Phosphoserine. A phosphoserine; by CK2 mark is found at S110 and S141. A compositionally biased stretch (basic and acidic residues) spans E148–R161. A Phosphoserine modification is found at S167. Positions L197 to E207 are enriched in acidic residues. Basic and acidic residues predominate over residues I208–M227. The ABC transporter 1 domain maps to I266–L510. G298 to T305 serves as a coordination point for ATP. The span at K521–T542 shows a compositional bias: basic and acidic residues. The segment at K521 to L564 is disordered. S557 carries the phosphoserine modification. One can recognise an ABC transporter 2 domain in the interval L587 to V802. Residue G620–S627 coordinates ATP.

This sequence belongs to the ABC transporter superfamily. ABCF family. EF3 subfamily. As to quaternary structure, interacts (via N-terminus) with EIF2S1; the interaction is independent of its phosphorylated status. Associates (via both ABC transporter domains) with the ribosomes. In terms of processing, phosphorylated at phosphoserine and phosphothreonine. Phosphorylation on Ser-110 and Ser-141 by CK2; inhibits association of EIF2 with ribosomes.

The protein localises to the cytoplasm. It localises to the nucleus. Its subcellular location is the nucleoplasm. The protein resides in the nucleus envelope. Its function is as follows. Required for efficient Cap- and IRES-mediated mRNA translation initiation. Not involved in the ribosome biogenesis. This chain is ATP-binding cassette sub-family F member 1 (ABCF1), found in Sus scrofa (Pig).